The chain runs to 122 residues: MIQQESRVRVADNTGAKEILCIRVLGGSSRRYAGIGDVIVATVKDAIPGGNIKKGEVVKAVIVRTTKERRRPDGSYIKFDENAAVLIKADSDPRGTRIFGPVGRELREKKFMKIVSLAPEVL.

The protein belongs to the universal ribosomal protein uL14 family. Part of the 50S ribosomal subunit. Forms a cluster with proteins L3 and L19. In the 70S ribosome, L14 and L19 interact and together make contacts with the 16S rRNA in bridges B5 and B8.

Its function is as follows. Binds to 23S rRNA. Forms part of two intersubunit bridges in the 70S ribosome. The chain is Large ribosomal subunit protein uL14 from Rhodococcus erythropolis (strain PR4 / NBRC 100887).